We begin with the raw amino-acid sequence, 85 residues long: Progonadoliberin-2 (85 aa).

Residues 1–23 form the signal peptide; that stretch reads MCVSRLVLLFGLLLCVGAQLSNA. Residue Gln-24 is modified to Pyrrolidone carboxylic acid. At Gly-33 the chain carries Glycine amide.

It belongs to the GnRH family.

The protein localises to the secreted. Its function is as follows. Stimulates the secretion of gonadotropins. This is Progonadoliberin-2 (gnrh2) from Dicentrarchus labrax (European seabass).